The chain runs to 444 residues: uncharacterized protein (444 aa).

The Radical SAM core domain occupies 164-381 (GAYGKSFLLE…EKALKKEGIR (218 aa)). Positions 178, 182, and 185 each coordinate [4Fe-4S] cluster.

[4Fe-4S] cluster serves as cofactor.

This is an uncharacterized protein from Methanocaldococcus jannaschii (strain ATCC 43067 / DSM 2661 / JAL-1 / JCM 10045 / NBRC 100440) (Methanococcus jannaschii).